Reading from the N-terminus, the 518-residue chain is Probable cytochrome P450 9h1 (518 aa).

Heme is bound at residue C462.

The protein belongs to the cytochrome P450 family. Requires heme as cofactor.

The protein resides in the endoplasmic reticulum membrane. The protein localises to the microsome membrane. Its function is as follows. May be involved in the metabolism of insect hormones and in the breakdown of synthetic insecticides. The chain is Probable cytochrome P450 9h1 (Cyp9h1) from Drosophila melanogaster (Fruit fly).